We begin with the raw amino-acid sequence, 283 residues long: 4-diphosphocytidyl-2-C-methyl-D-erythritol kinase (283 aa).

Residue K9 is part of the active site. P93–S103 contacts ATP. D135 is an active-site residue.

This sequence belongs to the GHMP kinase family. IspE subfamily.

It catalyses the reaction 4-CDP-2-C-methyl-D-erythritol + ATP = 4-CDP-2-C-methyl-D-erythritol 2-phosphate + ADP + H(+). It participates in isoprenoid biosynthesis; isopentenyl diphosphate biosynthesis via DXP pathway; isopentenyl diphosphate from 1-deoxy-D-xylulose 5-phosphate: step 3/6. Its function is as follows. Catalyzes the phosphorylation of the position 2 hydroxy group of 4-diphosphocytidyl-2C-methyl-D-erythritol. The protein is 4-diphosphocytidyl-2-C-methyl-D-erythritol kinase of Macrococcus caseolyticus (strain JCSC5402) (Macrococcoides caseolyticum).